A 622-amino-acid polypeptide reads, in one-letter code: DNA-directed RNA polymerase subunit gamma (622 aa).

Zn(2+)-binding residues include Cys-70, Cys-72, Cys-85, and Cys-88. Mg(2+) contacts are provided by Asp-466, Asp-468, and Asp-470.

The protein belongs to the RNA polymerase beta' chain family. RpoC1 subfamily. In terms of assembly, in cyanobacteria the RNAP catalytic core is composed of 2 alpha, 1 beta, 1 beta', 1 gamma and 1 omega subunit. When a sigma factor is associated with the core the holoenzyme is formed, which can initiate transcription. Mg(2+) serves as cofactor. It depends on Zn(2+) as a cofactor.

The catalysed reaction is RNA(n) + a ribonucleoside 5'-triphosphate = RNA(n+1) + diphosphate. In terms of biological role, DNA-dependent RNA polymerase catalyzes the transcription of DNA into RNA using the four ribonucleoside triphosphates as substrates. The protein is DNA-directed RNA polymerase subunit gamma of Cyanothece sp. (strain PCC 7425 / ATCC 29141).